Here is a 145-residue protein sequence, read N- to C-terminus: Large ribosomal subunit protein uL15 (145 aa).

A compositionally biased stretch (basic and acidic residues) spans 1 to 18 (MKLHELKYTEGSKKDVTR). A disordered region spans residues 1 to 51 (MKLHELKYTEGSKKDVTRVGRGMASGKGKTSTRGHKGQNSRSGGGVRVGFE). The span at 42–51 (SGGGVRVGFE) shows a compositional bias: gly residues.

The protein belongs to the universal ribosomal protein uL15 family. As to quaternary structure, part of the 50S ribosomal subunit.

Binds to the 23S rRNA. The polypeptide is Large ribosomal subunit protein uL15 (Mesoplasma florum (strain ATCC 33453 / NBRC 100688 / NCTC 11704 / L1) (Acholeplasma florum)).